The chain runs to 271 residues: Putative phosphoenolpyruvate synthase regulatory protein (271 aa).

Position 151–158 (151–158 (GVSRSGKT)) interacts with ADP.

This sequence belongs to the pyruvate, phosphate/water dikinase regulatory protein family. PSRP subfamily.

It carries out the reaction [pyruvate, water dikinase] + ADP = [pyruvate, water dikinase]-phosphate + AMP + H(+). The enzyme catalyses [pyruvate, water dikinase]-phosphate + phosphate + H(+) = [pyruvate, water dikinase] + diphosphate. Bifunctional serine/threonine kinase and phosphorylase involved in the regulation of the phosphoenolpyruvate synthase (PEPS) by catalyzing its phosphorylation/dephosphorylation. The sequence is that of Putative phosphoenolpyruvate synthase regulatory protein from Burkholderia lata (strain ATCC 17760 / DSM 23089 / LMG 22485 / NCIMB 9086 / R18194 / 383).